Consider the following 470-residue polypeptide: Cysteine--tRNA ligase 1 (470 aa).

Position 29 (Cys29) interacts with Zn(2+). Residues 31–41 carry the 'HIGH' region motif; sequence PTVYDDAHIGN. Residues Cys221, His246, and Glu250 each contribute to the Zn(2+) site. The 'KMSKS' region motif lies at 279-283; it reads KMSKS. An ATP-binding site is contributed by Lys282.

It belongs to the class-I aminoacyl-tRNA synthetase family. As to quaternary structure, monomer. Zn(2+) serves as cofactor.

It is found in the cytoplasm. It carries out the reaction tRNA(Cys) + L-cysteine + ATP = L-cysteinyl-tRNA(Cys) + AMP + diphosphate. The protein is Cysteine--tRNA ligase 1 of Burkholderia lata (strain ATCC 17760 / DSM 23089 / LMG 22485 / NCIMB 9086 / R18194 / 383).